Consider the following 315-residue polypeptide: Phosphatidylglycerol--prolipoprotein diacylglyceryl transferase (315 aa).

2 helical membrane-spanning segments follow: residues 19 to 39 (FTIH…VWIL) and 93 to 113 (VWEG…VAFL). Arginine 141 lines the a 1,2-diacyl-sn-glycero-3-phospho-(1'-sn-glycerol) pocket. Transmembrane regions (helical) follow at residues 188–208 (LFHP…ALII) and 256–276 (VWTA…LYQY).

Belongs to the Lgt family.

Its subcellular location is the cell membrane. The catalysed reaction is L-cysteinyl-[prolipoprotein] + a 1,2-diacyl-sn-glycero-3-phospho-(1'-sn-glycerol) = an S-1,2-diacyl-sn-glyceryl-L-cysteinyl-[prolipoprotein] + sn-glycerol 1-phosphate + H(+). It functions in the pathway protein modification; lipoprotein biosynthesis (diacylglyceryl transfer). Functionally, catalyzes the transfer of the diacylglyceryl group from phosphatidylglycerol to the sulfhydryl group of the N-terminal cysteine of a prolipoprotein, the first step in the formation of mature lipoproteins. The protein is Phosphatidylglycerol--prolipoprotein diacylglyceryl transferase of Bifidobacterium longum (strain NCC 2705).